We begin with the raw amino-acid sequence, 272 residues long: 5'-nucleotidase SurE (272 aa).

4 residues coordinate a divalent metal cation: Asp8, Asp9, Ser39, and Asn96.

The protein belongs to the SurE nucleotidase family. A divalent metal cation serves as cofactor.

It localises to the cytoplasm. It carries out the reaction a ribonucleoside 5'-phosphate + H2O = a ribonucleoside + phosphate. Its function is as follows. Nucleotidase that shows phosphatase activity on nucleoside 5'-monophosphates. The polypeptide is 5'-nucleotidase SurE (Heliobacterium modesticaldum (strain ATCC 51547 / Ice1)).